A 467-amino-acid chain; its full sequence is 3-isopropylmalate dehydratase large subunit (467 aa).

Residues Cys347, Cys407, and Cys410 each contribute to the [4Fe-4S] cluster site.

The protein belongs to the aconitase/IPM isomerase family. LeuC type 1 subfamily. In terms of assembly, heterodimer of LeuC and LeuD. The cofactor is [4Fe-4S] cluster.

The catalysed reaction is (2R,3S)-3-isopropylmalate = (2S)-2-isopropylmalate. It functions in the pathway amino-acid biosynthesis; L-leucine biosynthesis; L-leucine from 3-methyl-2-oxobutanoate: step 2/4. Its function is as follows. Catalyzes the isomerization between 2-isopropylmalate and 3-isopropylmalate, via the formation of 2-isopropylmaleate. The sequence is that of 3-isopropylmalate dehydratase large subunit from Crocosphaera subtropica (strain ATCC 51142 / BH68) (Cyanothece sp. (strain ATCC 51142)).